A 504-amino-acid polypeptide reads, in one-letter code: L-amino-acid oxidase (504 aa).

An N-terminal signal peptide occupies residues 1–18 (MNVFFMFSLLFLAALGSC). An intrachain disulfide couples Cys28 to Cys191. FAD is bound by residues 61 to 62 (MS), 81 to 82 (EA), Arg89, and 105 to 108 (GPMR). Arg108 contacts substrate. Residue Asn190 is glycosylated (N-linked (GlcNAc...) asparagine). His241 is a substrate binding site. Val279 contacts FAD. Cys349 and Cys430 form a disulfide bridge. An N-linked (GlcNAc...) asparagine glycan is attached at Asn379. Tyr390 is a substrate binding site. FAD is bound by residues Glu475 and 482–487 (GWIDST). A substrate-binding site is contributed by 482–483 (GW).

This sequence belongs to the flavin monoamine oxidase family. FIG1 subfamily. In terms of assembly, homodimer; non-covalently linked. FAD serves as cofactor. In terms of tissue distribution, expressed by the venom gland.

It localises to the secreted. It catalyses the reaction an L-alpha-amino acid + O2 + H2O = a 2-oxocarboxylate + H2O2 + NH4(+). It carries out the reaction L-leucine + O2 + H2O = 4-methyl-2-oxopentanoate + H2O2 + NH4(+). Its function is as follows. Catalyzes an oxidative deamination of predominantly hydrophobic and aromatic L-amino acids, thus producing hydrogen peroxide that may contribute to the diverse toxic effects of this enzyme. Shows activity on L-Leu. Exhibits diverse biological activities, such as apoptosis, and inhibition of agonist- and shear stress-induced platelet aggregation (SIPA). Effects of snake L-amino oxidases on platelets are controversial, since they either induce aggregation or inhibit agonist-induced aggregation. These different effects are probably due to different experimental conditions. This protein may also induce hemorrhage, hemolysis, edema, antibacterial and antiparasitic activities. The protein is L-amino-acid oxidase of Gloydius blomhoffii (Mamushi).